A 659-amino-acid polypeptide reads, in one-letter code: RNA-binding protein MIP6 (659 aa).

Polar residues predominate over residues 1–27 (MPNSHGNVLNNISLNSKQNPRSISKSC). The disordered stretch occupies residues 1–35 (MPNSHGNVLNNISLNSKQNPRSISKSCPNDKDARQ). RRM domains are found at residues 111–189 (NSLF…PSMK), 199–267 (TNVF…GNKI), and 313–389 (KTIL…PGKD).

As to quaternary structure, interacts with MEX67.

It is found in the cytoplasm. The sequence is that of RNA-binding protein MIP6 (MIP6) from Saccharomyces cerevisiae (strain ATCC 204508 / S288c) (Baker's yeast).